A 498-amino-acid polypeptide reads, in one-letter code: ATP synthase subunit beta, chloroplastic (498 aa).

172-179 (GGAGVGKT) is an ATP binding site.

This sequence belongs to the ATPase alpha/beta chains family. In terms of assembly, F-type ATPases have 2 components, CF(1) - the catalytic core - and CF(0) - the membrane proton channel. CF(1) has five subunits: alpha(3), beta(3), gamma(1), delta(1), epsilon(1). CF(0) has four main subunits: a(1), b(1), b'(1) and c(9-12).

The protein resides in the plastid. The protein localises to the chloroplast thylakoid membrane. The enzyme catalyses ATP + H2O + 4 H(+)(in) = ADP + phosphate + 5 H(+)(out). Functionally, produces ATP from ADP in the presence of a proton gradient across the membrane. The catalytic sites are hosted primarily by the beta subunits. The sequence is that of ATP synthase subunit beta, chloroplastic from Whiteheadia bifolia (Elephants ears).